We begin with the raw amino-acid sequence, 75 residues long: Translation initiation factor IF-1 (75 aa).

The 72-residue stretch at 1 to 72 (MSKQDLIEME…TKGRITYRLK (72 aa)) folds into the S1-like domain.

This sequence belongs to the IF-1 family. Component of the 30S ribosomal translation pre-initiation complex which assembles on the 30S ribosome in the order IF-2 and IF-3, IF-1 and N-formylmethionyl-tRNA(fMet); mRNA recruitment can occur at any time during PIC assembly.

The protein localises to the cytoplasm. One of the essential components for the initiation of protein synthesis. Stabilizes the binding of IF-2 and IF-3 on the 30S subunit to which N-formylmethionyl-tRNA(fMet) subsequently binds. Helps modulate mRNA selection, yielding the 30S pre-initiation complex (PIC). Upon addition of the 50S ribosomal subunit IF-1, IF-2 and IF-3 are released leaving the mature 70S translation initiation complex. The polypeptide is Translation initiation factor IF-1 (Synechocystis sp. (strain ATCC 27184 / PCC 6803 / Kazusa)).